A 430-amino-acid polypeptide reads, in one-letter code: uncharacterized protein (430 aa).

Transmembrane regions (helical) follow at residues 13 to 33 (FFAA…FAFF), 47 to 67 (LAEL…GVVA), 88 to 108 (VVLF…ILFI), 138 to 158 (GLNQ…GAFM), 228 to 248 (LIFG…LPMF), 264 to 284 (SVFT…GTLI), 296 to 316 (IPIF…ILWV), 319 to 339 (AAAF…GGWM), 358 to 378 (FMMF…PKFV), and 383 to 403 (YLYY…FIAL).

The protein belongs to the major facilitator superfamily.

The protein resides in the cell membrane. This is an uncharacterized protein from Bacillus subtilis (strain 168).